The primary structure comprises 575 residues: Arginine--tRNA ligase (575 aa).

A 'HIGH' region motif is present at residues Ala136 to His146.

This sequence belongs to the class-I aminoacyl-tRNA synthetase family. Monomer.

It localises to the cytoplasm. The catalysed reaction is tRNA(Arg) + L-arginine + ATP = L-arginyl-tRNA(Arg) + AMP + diphosphate. The chain is Arginine--tRNA ligase from Polynucleobacter necessarius subsp. necessarius (strain STIR1).